Here is an 857-residue protein sequence, read N- to C-terminus: Leucine--tRNA ligase (857 aa).

A 'HIGH' region motif is present at residues 42-52; the sequence is PYPSGRLHMGH. The short motif at 617–621 is the 'KMSKS' region element; that stretch reads KMSKS. An ATP-binding site is contributed by Lys620.

This sequence belongs to the class-I aminoacyl-tRNA synthetase family.

The protein resides in the cytoplasm. The catalysed reaction is tRNA(Leu) + L-leucine + ATP = L-leucyl-tRNA(Leu) + AMP + diphosphate. This chain is Leucine--tRNA ligase, found in Vibrio parahaemolyticus serotype O3:K6 (strain RIMD 2210633).